A 118-amino-acid polypeptide reads, in one-letter code: NADH-quinone oxidoreductase subunit A (118 aa).

Transmembrane regions (helical) follow at residues 8–28 (IGIF…LAFF), 64–84 (ALAF…AVAF), and 87–107 (VGLY…AGLL).

Belongs to the complex I subunit 3 family. NDH-1 is composed of 14 different subunits. Subunits NuoA, H, J, K, L, M, N constitute the membrane sector of the complex.

The protein localises to the cell membrane. It carries out the reaction a quinone + NADH + 5 H(+)(in) = a quinol + NAD(+) + 4 H(+)(out). Its function is as follows. NDH-1 shuttles electrons from NADH, via FMN and iron-sulfur (Fe-S) centers, to quinones in the respiratory chain. The immediate electron acceptor for the enzyme in this species is believed to be ubiquinone. Couples the redox reaction to proton translocation (for every two electrons transferred, four hydrogen ions are translocated across the cytoplasmic membrane), and thus conserves the redox energy in a proton gradient. The sequence is that of NADH-quinone oxidoreductase subunit A from Chloroflexus aurantiacus (strain ATCC 29366 / DSM 635 / J-10-fl).